We begin with the raw amino-acid sequence, 92 residues long: Small ribosomal subunit protein uS19c (92 aa).

Belongs to the universal ribosomal protein uS19 family.

Its subcellular location is the plastid. The protein resides in the chloroplast. In terms of biological role, protein S19 forms a complex with S13 that binds strongly to the 16S ribosomal RNA. This chain is Small ribosomal subunit protein uS19c, found in Physcomitrium patens (Spreading-leaved earth moss).